The sequence spans 266 residues: Phosphate import ATP-binding protein PstB 1 (266 aa).

Positions 21 to 261 (ISTQDLSVFY…PKGEITEDYI (241 aa)) constitute an ABC transporter domain. 54–61 (GGSGSGKS) lines the ATP pocket.

The protein belongs to the ABC transporter superfamily. Phosphate importer (TC 3.A.1.7) family. As to quaternary structure, the complex is composed of two ATP-binding proteins (PstB), two transmembrane proteins (PstC and PstA) and a solute-binding protein (PstS).

It is found in the cell membrane. It catalyses the reaction phosphate(out) + ATP + H2O = ADP + 2 phosphate(in) + H(+). Its function is as follows. Part of the ABC transporter complex PstSACB involved in phosphate import. Responsible for energy coupling to the transport system. The polypeptide is Phosphate import ATP-binding protein PstB 1 (Lactobacillus johnsonii (strain CNCM I-12250 / La1 / NCC 533)).